The primary structure comprises 177 residues: MTSSAMDNNESKVLEMVYDATILPDCSGMDPSIIDCINRHINMRIQRSYSSNIIAILDRFLMMNKDELNNTQCHIIKEFMTYEQMAIDYYGGYVNAILYQIRKRPNQHHTIDLFKRIKRTRYDTFKVNPVEFVKKVIGFVSILNKYKPIYSYVLYENVLYDELKCFIDYVETKYFQN.

The protein belongs to the poxviridae OPG036 family.

The protein localises to the host nucleus. Functionally, plays a role in the inhibition of host innate immune response. Within the host nucleus, inhibits activation of interferon-beta promoter by inhibiting IRF3 activation. This Monkeypox virus protein is Protein OPG036 (OPG036).